The chain runs to 530 residues: Seeligeriolysin (530 aa).

An N-terminal signal peptide occupies residues 1–25 (MKIFGLVIMSLLFVSLPITQQPEAR). Residues 36–55 (TISPAETPESPPATPKTPVE) form a disordered region. 4 consecutive transmembrane segments (beta stranded) span residues 215 to 228 (ESQL…AFKA), 235 to 244 (VNFEAISDGK), 313 to 322 (SNKVKTAFEA), and 330 to 342 (KGDV…IKNS). A Conserved undecapeptide motif is present at residues 484 to 494 (ECTGLFWEWWR). The Cholesterol binding motif lies at 516-517 (TL).

It belongs to the cholesterol-dependent cytolysin family. As to quaternary structure, homooligomeric pore complex of 35 to 50 subunits; when inserted in the host membrane.

It localises to the secreted. It is found in the host cell membrane. In terms of biological role, a cholesterol-dependent toxin that causes cytolysis by forming pores in cholesterol containing host membranes. L.seeligeri is non-pathogenic, perhaps in part because this protein is about 25% as toxic as listeriolysin O. Mutating a single residue in the undecapeptide increases toxicity 2-fold. After binding to target membranes, the protein undergoes a major conformation change, leading to its insertion in the host membrane and formation of an oligomeric pore complex. Cholesterol is required for binding to host membranes, membrane insertion and pore formation; cholesterol binding is mediated by a Thr-Leu pair in the C-terminus. Can be reversibly inactivated by oxidation. This is Seeligeriolysin from Listeria seeligeri.